Here is a 255-residue protein sequence, read N- to C-terminus: Wtf element wtf15 (255 aa).

Positions 19 to 78 are disordered; sequence KAGHEIDLEGSPPSEHNSEEKSTLPSNSDILTSANPVSQASETPDHSIESNTGSTQSPTS. Composition is skewed to polar residues over residues 41–60 and 67–78; these read TLPS…QASE and ESNTGSTQSPTS. Helical transmembrane passes span 85–105, 112–132, and 162–182; these read FSFC…CVLP, FLIA…SGSI, and FLKT…LVLL.

Belongs to the WTF family.

The protein resides in the spore membrane. Functionally, may act in meiotic drive. This chain is Wtf element wtf15, found in Schizosaccharomyces kambucha (Fission yeast).